Reading from the N-terminus, the 199-residue chain is 7-methyl-GTP pyrophosphatase (199 aa).

The active-site Proton acceptor is the aspartate 73.

This sequence belongs to the Maf family. YceF subfamily. Requires a divalent metal cation as cofactor.

The protein resides in the cytoplasm. It carries out the reaction N(7)-methyl-GTP + H2O = N(7)-methyl-GMP + diphosphate + H(+). Nucleoside triphosphate pyrophosphatase that hydrolyzes 7-methyl-GTP (m(7)GTP). May have a dual role in cell division arrest and in preventing the incorporation of modified nucleotides into cellular nucleic acids. In Bordetella bronchiseptica (strain ATCC BAA-588 / NCTC 13252 / RB50) (Alcaligenes bronchisepticus), this protein is 7-methyl-GTP pyrophosphatase.